Consider the following 793-residue polypeptide: Probable phosphoketolase (793 aa).

Belongs to the XFP family. Thiamine diphosphate serves as cofactor.

The sequence is that of Probable phosphoketolase from Gloeobacter violaceus (strain ATCC 29082 / PCC 7421).